The primary structure comprises 561 residues: Glucose-6-phosphate isomerase (561 aa).

Glutamate 366 (proton donor) is an active-site residue. Catalysis depends on residues histidine 397 and lysine 525.

Belongs to the GPI family.

It localises to the cytoplasm. The catalysed reaction is alpha-D-glucose 6-phosphate = beta-D-fructose 6-phosphate. Its pathway is carbohydrate degradation; glycolysis; D-glyceraldehyde 3-phosphate and glycerone phosphate from D-glucose: step 2/4. In Dictyostelium discoideum (Social amoeba), this protein is Glucose-6-phosphate isomerase (gpi).